The primary structure comprises 539 residues: Alpha-copaene synthase (539 aa).

Mg(2+) contacts are provided by Asp-290 and Asp-294. Substrate contacts are provided by Asp-290, Asp-294, and Arg-432. Positions 290 to 294 match the DDXXD motif motif; it reads DDTFD.

The protein belongs to the terpene synthase family. As to quaternary structure, monomer. Mg(2+) is required as a cofactor. Mn(2+) serves as cofactor.

The protein resides in the cytoplasm. The enzyme catalyses (2E,6E)-farnesyl diphosphate = alpha-copaene + diphosphate. The catalysed reaction is (2E,6E)-farnesyl diphosphate = (+)-germacrene D + diphosphate. It carries out the reaction (2E,6E)-farnesyl diphosphate = (-)-(E)-beta-caryophyllene + diphosphate. It catalyses the reaction (2E,6E)-farnesyl diphosphate = delta-cadinene + diphosphate. Its pathway is secondary metabolite biosynthesis; terpenoid biosynthesis. In terms of biological role, converts farnesyl diphosphate to the bicyclic olefins alpha-copaene, (E)-beta-caryophyllene, and to the macrocyclic sesquiterpene germacrene D. Also mediates the biosynthesis of minor sesquiterpene hydrocarbons including delta-cadinene. Involved in indirect defense by producing volatile signals attracting natural enemies of herbivores. This is Alpha-copaene synthase from Zea mays (Maize).